A 109-amino-acid polypeptide reads, in one-letter code: Nucleoid-associated protein HAPS_1040 (109 aa).

The interval 1–21 is disordered; the sequence is MFGKGGLGGLMKQAQQMQERM. Over residues 10-19 the composition is skewed to low complexity; the sequence is LMKQAQQMQE.

The protein belongs to the YbaB/EbfC family. As to quaternary structure, homodimer.

The protein resides in the cytoplasm. It localises to the nucleoid. In terms of biological role, binds to DNA and alters its conformation. May be involved in regulation of gene expression, nucleoid organization and DNA protection. The chain is Nucleoid-associated protein HAPS_1040 from Glaesserella parasuis serovar 5 (strain SH0165) (Haemophilus parasuis).